The following is a 264-amino-acid chain: Phosphonoacetaldehyde hydrolase (264 aa).

The active-site Nucleophile is Asp-9. Mg(2+)-binding residues include Asp-9 and Ala-11. Catalysis depends on Lys-50, which acts as the Schiff-base intermediate with substrate. Mg(2+) is bound at residue Asp-183.

The protein belongs to the HAD-like hydrolase superfamily. PhnX family. As to quaternary structure, homodimer. Requires Mg(2+) as cofactor.

The enzyme catalyses phosphonoacetaldehyde + H2O = acetaldehyde + phosphate + H(+). Involved in phosphonate degradation. In Bacillus cereus (strain ZK / E33L), this protein is Phosphonoacetaldehyde hydrolase.